Reading from the N-terminus, the 98-residue chain is Putative protein adenylyltransferase MJ1217 (98 aa).

The short motif at 31–45 is the GSX(10)DXD motif element; it reads GSYAREEQKETSDID. Mg(2+) contacts are provided by Asp-43, Asp-45, and Asp-75.

The protein belongs to the MntA antitoxin family. Probably forms a complex with cognate toxin MJ1216. Mg(2+) serves as cofactor.

The catalysed reaction is L-tyrosyl-[protein] + ATP = O-(5'-adenylyl)-L-tyrosyl-[protein] + diphosphate. The enzyme catalyses O-(5'-adenylyl)-L-tyrosyl-[protein] + ATP = O-[5'-(adenylyl-(5'-&gt;3')-adenylyl)]-L-tyrosyl-[protein] + diphosphate. Probable antitoxin component of a putative type VII toxin-antitoxin (TA) system. Neutralizes cognate toxic MJ1216 by di-AMPylation. The sequence is that of Putative protein adenylyltransferase MJ1217 from Methanocaldococcus jannaschii (strain ATCC 43067 / DSM 2661 / JAL-1 / JCM 10045 / NBRC 100440) (Methanococcus jannaschii).